The following is a 357-amino-acid chain: Cyclin-dependent kinase-like 1 (357 aa).

One can recognise a Protein kinase domain in the interval 4-287 (YEKIGKIGEG…CEQLLHHPYF (284 aa)). ATP contacts are provided by residues 10–18 (IGEGSYGVV) and K33. Residues 45-51 (KKIALRE) carry the [NKR]KIAxRE motif. The Proton acceptor role is filled by D126.

This sequence belongs to the protein kinase superfamily. CMGC Ser/Thr protein kinase family. CDC2/CDKX subfamily. As to expression, highly expressed in kidney, and to a lower extent in ovary.

It localises to the cytoplasm. The protein localises to the nucleus. The enzyme catalyses L-seryl-[protein] + ATP = O-phospho-L-seryl-[protein] + ADP + H(+). The catalysed reaction is L-threonyl-[protein] + ATP = O-phospho-L-threonyl-[protein] + ADP + H(+). This chain is Cyclin-dependent kinase-like 1, found in Homo sapiens (Human).